Reading from the N-terminus, the 623-residue chain is MPAEIDIDEADVLVLSQELQKTSKLTFEINKSLKKIAATSNQSSQLFTPILARNNVLTTLQRNIESTLNSVASVKDLANEASKYEIILQKGINQVGLKQYTQVVHKLDDMLEDIQSGQANREENSEFHGILTHLEQLIKRSEAQLRVYFISILNSIKPFDPQINITKKMPFPYYEDQQLGALSWILDYFHGNSEGSIIQDILVGERSKLILKCMAFLEPFAKEISTAKNAPYEKGSSGMNSYTEALLGFIANEKSLVDDLYSQYTESKPHVLSQILSPLISAYAKLFGANLKIVRSNLENFGFFSFELVESINDVKKSLRGKELQNYNLLQDCTQEVRQVTQSLFRDAIDRIIKKANSISTIPSNNGVTEATVDTMSRLRKFSEYKNGCLGAMDNITRENWLPSNYKEKEYTLQNEALNWEDHNVLLSCFISDCIDTLAVNLERKAQIALMPNQEPDVANPNSSKNKHKQRIGFFILMNLTLVEQIVEKSELNLMLAGEGHSRLERLKKRYISYMVSDWRDLTANLMDSVFIDSSGKKSKDKEQIKEKFRKFNEGFEDLVSKTKQYKLSDPSLKVTLKSEIISLVMPMYERFYSRYKDSFKNPRKHIKYTPDELTTVLNQLVR.

The protein belongs to the EXO70 family. In terms of assembly, the exocyst complex is composed of SEC3, SEC5, SEC6, SEC8, SEC10, SEC15, EXO70 and EXO84. Interacts with RHO3.

It is found in the cytoplasmic vesicle. Its subcellular location is the secretory vesicle. The protein localises to the bud. The protein resides in the bud neck. Its function is as follows. Involved in the secretory pathway as part of the exocyst complex which tethers secretory vesicles to the sites of exocytosis. Plays a role in the assembly of the exocyst. The protein is Exocyst complex component EXO70 (EXO70) of Saccharomyces cerevisiae (strain ATCC 204508 / S288c) (Baker's yeast).